Consider the following 312-residue polypeptide: tRNA uridine(34) hydroxylase (312 aa).

The Rhodanese domain occupies 147-237; that stretch reads SDRNVIFIDM…GILGYVHDAN (91 aa). The active-site Cysteine persulfide intermediate is Cys201.

It belongs to the TrhO family.

It carries out the reaction uridine(34) in tRNA + AH2 + O2 = 5-hydroxyuridine(34) in tRNA + A + H2O. In terms of biological role, catalyzes oxygen-dependent 5-hydroxyuridine (ho5U) modification at position 34 in tRNAs. The sequence is that of tRNA uridine(34) hydroxylase from Buchnera aphidicola subsp. Schizaphis graminum (strain Sg).